We begin with the raw amino-acid sequence, 1105 residues long: DNA polymerase delta catalytic subunit (1105 aa).

The tract at residues 1–46 (MSSGGRGGKRRGAPPPGPSGAAAKRAHPGGTPQPPPPAATAAAPVA) is disordered. Cys-1015, Cys-1018, Cys-1030, and Cys-1033 together coordinate Zn(2+). Residues 1015–1033 (CLGCKAVISGSNQTLCFHC) form a CysA-type zinc finger. [4Fe-4S] cluster is bound by residues Cys-1062, Cys-1065, Cys-1075, and Cys-1080. Positions 1062-1080 (CQECQGSLHQDVLCTSRDC) match the CysB motif motif.

Belongs to the DNA polymerase type-B family. As to quaternary structure, heterodimer with subunits of 125 kDa and 50 kDa. The 125 kDa subunit contains the polymerase active site and most likely the active site for the 3'-5' exonuclease activity. [4Fe-4S] cluster serves as cofactor.

Its subcellular location is the nucleus. It catalyses the reaction DNA(n) + a 2'-deoxyribonucleoside 5'-triphosphate = DNA(n+1) + diphosphate. This polymerase possesses two enzymatic activities: DNA synthesis (polymerase) and an exonucleolytic activity that degrades single-stranded DNA in the 3'- to 5'-direction. This Oryza sativa subsp. japonica (Rice) protein is DNA polymerase delta catalytic subunit (POLD1).